A 665-amino-acid chain; its full sequence is Intraflagellar transport protein 70B (665 aa).

TPR repeat units follow at residues 11–44 (DGEFTAVVYRLIRNARYAEAVQLLGGELQRSPRS), 45–78 (RAGLSLLGYCYYRLQEFALAAECYEQLGQLHPEL), 154–187 (TDGQINLGCLLYKEGQYEAACSKFFAALQASGYQ), 189–221 (DLSYNLALAYYSSRQYASALKHIAEIIERGIRQ), 393–424 (LTIQVQEARHNRDDEAIKKAVNEYDETMEKYI), 425–457 (PVLMAQAKIYWNLENYPMVEKIFRKSVEFCNDH), and 459–492 (VWKLNVAHVLFMQENKYKEAIGFYEPIVKKHYDN). A disordered region spans residues 130–154 (PGSRSLVEQLPSREGGEESGGENET). Positions 508-535 (YIMTSQNEEAEELMRKIEKEEEQLSYDD) form a coiled coil. The TPR 8 repeat unit spans residues 544–577 (CIVNLVIGTLYCAKGNYDFGISRVIKSLEPYNKK).

Belongs to the TTC30/dfy-1/fleer family. As to quaternary structure, interacts with the IFT B complex components IFT27, IFT46, IFT74, IFT52, IFT57, IFT80, IFT81 and IFT88. Interacts with KIF17.

It localises to the cell projection. It is found in the cilium. Functionally, required for polyglutamylation of axonemal tubulin. Plays a role in anterograde intraflagellar transport (IFT), the process by which cilia precursors are transported from the base of the cilium to the site of their incorporation at the tip. This Homo sapiens (Human) protein is Intraflagellar transport protein 70B.